We begin with the raw amino-acid sequence, 346 residues long: UDP-3-O-acylglucosamine N-acyltransferase (346 aa).

Catalysis depends on His-253, which acts as the Proton acceptor.

Belongs to the transferase hexapeptide repeat family. LpxD subfamily. In terms of assembly, homotrimer.

The catalysed reaction is a UDP-3-O-[(3R)-3-hydroxyacyl]-alpha-D-glucosamine + a (3R)-hydroxyacyl-[ACP] = a UDP-2-N,3-O-bis[(3R)-3-hydroxyacyl]-alpha-D-glucosamine + holo-[ACP] + H(+). Its pathway is bacterial outer membrane biogenesis; LPS lipid A biosynthesis. In terms of biological role, catalyzes the N-acylation of UDP-3-O-acylglucosamine using 3-hydroxyacyl-ACP as the acyl donor. Is involved in the biosynthesis of lipid A, a phosphorylated glycolipid that anchors the lipopolysaccharide to the outer membrane of the cell. This is UDP-3-O-acylglucosamine N-acyltransferase from Rickettsia conorii (strain ATCC VR-613 / Malish 7).